Reading from the N-terminus, the 184-residue chain is NADH-quinone oxidoreductase subunit B (184 aa).

Residues Cys37, Cys38, Cys103, and Cys132 each contribute to the [4Fe-4S] cluster site.

The protein belongs to the complex I 20 kDa subunit family. In terms of assembly, NDH-1 is composed of 14 different subunits. Subunits NuoB, C, D, E, F, and G constitute the peripheral sector of the complex. [4Fe-4S] cluster is required as a cofactor.

Its subcellular location is the cell membrane. It catalyses the reaction a quinone + NADH + 5 H(+)(in) = a quinol + NAD(+) + 4 H(+)(out). Functionally, NDH-1 shuttles electrons from NADH, via FMN and iron-sulfur (Fe-S) centers, to quinones in the respiratory chain. The immediate electron acceptor for the enzyme in this species is believed to be a menaquinone. Couples the redox reaction to proton translocation (for every two electrons transferred, four hydrogen ions are translocated across the cytoplasmic membrane), and thus conserves the redox energy in a proton gradient. The protein is NADH-quinone oxidoreductase subunit B of Mycolicibacterium paratuberculosis (strain ATCC BAA-968 / K-10) (Mycobacterium paratuberculosis).